The primary structure comprises 168 residues: Ribosome-binding factor A (168 aa).

The span at Val-122–Arg-136 shows a compositional bias: basic and acidic residues. The interval Val-122–Gly-168 is disordered. Positions Glu-144 to Glu-159 are enriched in acidic residues.

Belongs to the RbfA family. As to quaternary structure, monomer. Binds 30S ribosomal subunits, but not 50S ribosomal subunits or 70S ribosomes.

The protein resides in the cytoplasm. In terms of biological role, one of several proteins that assist in the late maturation steps of the functional core of the 30S ribosomal subunit. Associates with free 30S ribosomal subunits (but not with 30S subunits that are part of 70S ribosomes or polysomes). Required for efficient processing of 16S rRNA. May interact with the 5'-terminal helix region of 16S rRNA. The protein is Ribosome-binding factor A of Frankia casuarinae (strain DSM 45818 / CECT 9043 / HFP020203 / CcI3).